The chain runs to 202 residues: MTITALTLGMILSAYLAGSISSAVLVCRLRGLPDPRTQGSGNPGATNVLRIGGVSSAALVLFFDMLKGALPAYIAFRLGLDSVSLGIIAIAACLGHIFPIFFHFKGGKGVATAFGAMAPIGPELALLLMGSWVLMVLICRYSSLAAIVTALLAPFYTWYLDDRFVLPVAMLSALIIIRHKENIQRLLKGEESKFSRKKTPKT.

5 consecutive transmembrane segments (helical) span residues 6–26 (LTLG…AVLV), 56–76 (SAAL…YIAF), 82–102 (SVSL…PIFF), 118–138 (APIG…MVLI), and 141–161 (YSSL…WYLD).

This sequence belongs to the PlsY family. Probably interacts with PlsX.

It is found in the cell inner membrane. The enzyme catalyses an acyl phosphate + sn-glycerol 3-phosphate = a 1-acyl-sn-glycero-3-phosphate + phosphate. The protein operates within lipid metabolism; phospholipid metabolism. In terms of biological role, catalyzes the transfer of an acyl group from acyl-phosphate (acyl-PO(4)) to glycerol-3-phosphate (G3P) to form lysophosphatidic acid (LPA). This enzyme utilizes acyl-phosphate as fatty acyl donor, but not acyl-CoA or acyl-ACP. The chain is Glycerol-3-phosphate acyltransferase from Shewanella woodyi (strain ATCC 51908 / MS32).